A 252-amino-acid polypeptide reads, in one-letter code: 3-dehydroquinate dehydratase (252 aa).

Residues serine 21, glutamate 46–arginine 48, and arginine 82 contribute to the 3-dehydroquinate site. The active-site Proton donor/acceptor is histidine 143. The active-site Schiff-base intermediate with substrate is the lysine 170. Residues arginine 213, serine 232, and glutamine 236 each coordinate 3-dehydroquinate.

The protein belongs to the type-I 3-dehydroquinase family. As to quaternary structure, homodimer.

It carries out the reaction 3-dehydroquinate = 3-dehydroshikimate + H2O. It functions in the pathway metabolic intermediate biosynthesis; chorismate biosynthesis; chorismate from D-erythrose 4-phosphate and phosphoenolpyruvate: step 3/7. Involved in the third step of the chorismate pathway, which leads to the biosynthesis of aromatic amino acids. Catalyzes the cis-dehydration of 3-dehydroquinate (DHQ) and introduces the first double bond of the aromatic ring to yield 3-dehydroshikimate. The sequence is that of 3-dehydroquinate dehydratase from Escherichia coli (strain K12 / MC4100 / BW2952).